The sequence spans 29 residues: GILDSLKNFAKDAAGILLKKASCKLSGQC.

An intrachain disulfide couples C23 to C29.

As to expression, expressed by the skin glands.

Its subcellular location is the secreted. Its function is as follows. Antimicrobial peptide. This Pelophylax ridibundus (Marsh frog) protein is Brevinin-2Ra.